The chain runs to 279 residues: Putative hydro-lyase GDI0188/Gdia_2258 (279 aa).

The protein belongs to the D-glutamate cyclase family.

The sequence is that of Putative hydro-lyase GDI0188/Gdia_2258 from Gluconacetobacter diazotrophicus (strain ATCC 49037 / DSM 5601 / CCUG 37298 / CIP 103539 / LMG 7603 / PAl5).